The following is a 203-amino-acid chain: LexA repressor (203 aa).

Residues arginine 32 to arginine 52 constitute a DNA-binding region (H-T-H motif). Catalysis depends on for autocatalytic cleavage activity residues serine 121 and lysine 158.

The protein belongs to the peptidase S24 family. As to quaternary structure, homodimer.

The catalysed reaction is Hydrolysis of Ala-|-Gly bond in repressor LexA.. Functionally, represses a number of genes involved in the response to DNA damage (SOS response), including recA and lexA. In the presence of single-stranded DNA, RecA interacts with LexA causing an autocatalytic cleavage which disrupts the DNA-binding part of LexA, leading to derepression of the SOS regulon and eventually DNA repair. In Aromatoleum aromaticum (strain DSM 19018 / LMG 30748 / EbN1) (Azoarcus sp. (strain EbN1)), this protein is LexA repressor.